A 297-amino-acid polypeptide reads, in one-letter code: Homoserine kinase (297 aa).

82 to 92 (PLTRGLGSSAS) serves as a coordination point for ATP.

The protein belongs to the GHMP kinase family. Homoserine kinase subfamily.

It localises to the cytoplasm. It catalyses the reaction L-homoserine + ATP = O-phospho-L-homoserine + ADP + H(+). The protein operates within amino-acid biosynthesis; L-threonine biosynthesis; L-threonine from L-aspartate: step 4/5. In terms of biological role, catalyzes the ATP-dependent phosphorylation of L-homoserine to L-homoserine phosphate. This Bacillus mycoides (strain KBAB4) (Bacillus weihenstephanensis) protein is Homoserine kinase.